A 390-amino-acid polypeptide reads, in one-letter code: 1-deoxy-D-xylulose 5-phosphate reductoisomerase (390 aa).

NADPH is bound by residues Thr-18, Gly-19, Ser-20, Ile-21, and Asn-130. Lys-131 is a 1-deoxy-D-xylulose 5-phosphate binding site. Glu-132 lines the NADPH pocket. Residue Asp-156 participates in Mn(2+) binding. Ser-157, Glu-158, Ser-182, and His-205 together coordinate 1-deoxy-D-xylulose 5-phosphate. Glu-158 serves as a coordination point for Mn(2+). Gly-211 lines the NADPH pocket. Residues Ser-218, Asn-223, Lys-224, and Glu-227 each coordinate 1-deoxy-D-xylulose 5-phosphate. A Mn(2+)-binding site is contributed by Glu-227.

It belongs to the DXR family. Mg(2+) serves as cofactor. The cofactor is Mn(2+).

It carries out the reaction 2-C-methyl-D-erythritol 4-phosphate + NADP(+) = 1-deoxy-D-xylulose 5-phosphate + NADPH + H(+). It participates in isoprenoid biosynthesis; isopentenyl diphosphate biosynthesis via DXP pathway; isopentenyl diphosphate from 1-deoxy-D-xylulose 5-phosphate: step 1/6. In terms of biological role, catalyzes the NADPH-dependent rearrangement and reduction of 1-deoxy-D-xylulose-5-phosphate (DXP) to 2-C-methyl-D-erythritol 4-phosphate (MEP). The sequence is that of 1-deoxy-D-xylulose 5-phosphate reductoisomerase from Bacteroides thetaiotaomicron (strain ATCC 29148 / DSM 2079 / JCM 5827 / CCUG 10774 / NCTC 10582 / VPI-5482 / E50).